Consider the following 118-residue polypeptide: Small ribosomal subunit protein uS13 (118 aa).

Residues 94–118 (SLPLRGQRTKTNARTRKGPRKPIKK) form a disordered region.

This sequence belongs to the universal ribosomal protein uS13 family. Part of the 30S ribosomal subunit. Forms a loose heterodimer with protein S19. Forms two bridges to the 50S subunit in the 70S ribosome.

Functionally, located at the top of the head of the 30S subunit, it contacts several helices of the 16S rRNA. In the 70S ribosome it contacts the 23S rRNA (bridge B1a) and protein L5 of the 50S subunit (bridge B1b), connecting the 2 subunits; these bridges are implicated in subunit movement. Contacts the tRNAs in the A and P-sites. The protein is Small ribosomal subunit protein uS13 of Alteromonas mediterranea (strain DSM 17117 / CIP 110805 / LMG 28347 / Deep ecotype).